Consider the following 237-residue polypeptide: Ribosomal RNA small subunit methyltransferase G (237 aa).

Residues Gly-78, Phe-83, 129–130, and Arg-148 each bind S-adenosyl-L-methionine; that span reads AE. The segment at 218 to 237 is disordered; sequence KKETPNKYPRKAGMPNKRPL.

The protein belongs to the methyltransferase superfamily. RNA methyltransferase RsmG family.

The protein localises to the cytoplasm. Specifically methylates the N7 position of a guanine in 16S rRNA. The polypeptide is Ribosomal RNA small subunit methyltransferase G (Streptococcus pneumoniae serotype 19F (strain G54)).